Reading from the N-terminus, the 119-residue chain is Large ribosomal subunit protein uL18 (119 aa).

It belongs to the universal ribosomal protein uL18 family. As to quaternary structure, part of the 50S ribosomal subunit; part of the 5S rRNA/L5/L18/L25 subcomplex. Contacts the 5S and 23S rRNAs.

Functionally, this is one of the proteins that bind and probably mediate the attachment of the 5S RNA into the large ribosomal subunit, where it forms part of the central protuberance. This Malacoplasma penetrans (strain HF-2) (Mycoplasma penetrans) protein is Large ribosomal subunit protein uL18.